The primary structure comprises 114 residues: T cell receptor beta variable 6-6 (114 aa).

Residues 1–21 form the signal peptide; it reads MSISLLCCAAFPLLWAGPVNA. The region spanning 22–114 is the Ig-like domain; the sequence is GVTQTPKFRI…TSVYFCASSY (93 aa). A disulfide bond links Cys-42 and Cys-110. Asn-84 carries an N-linked (GlcNAc...) asparagine glycan.

Alpha-beta TR is a heterodimer composed of an alpha and beta chain; disulfide-linked. The alpha-beta TR is associated with the transmembrane signaling CD3 coreceptor proteins to form the TR-CD3 (TcR or TCR). The assembly of alpha-beta TR heterodimers with CD3 occurs in the endoplasmic reticulum where a single alpha-beta TR heterodimer associates with one CD3D-CD3E heterodimer, one CD3G-CD3E heterodimer and one CD247 homodimer forming a stable octameric structure. CD3D-CD3E and CD3G-CD3E heterodimers preferentially associate with TR alpha and TR beta chains, respectively. The association of the CD247 homodimer is the last step of TcR assembly in the endoplasmic reticulum and is required for transport to the cell surface.

The protein resides in the cell membrane. Its function is as follows. V region of the variable domain of T cell receptor (TR) beta chain that participates in the antigen recognition. Alpha-beta T cell receptors are antigen specific receptors which are essential to the immune response and are present on the cell surface of T lymphocytes. Recognize peptide-major histocompatibility (MH) (pMH) complexes that are displayed by antigen presenting cells (APC), a prerequisite for efficient T cell adaptive immunity against pathogens. Binding of alpha-beta TR to pMH complex initiates TR-CD3 clustering on the cell surface and intracellular activation of LCK that phosphorylates the ITAM motifs of CD3G, CD3D, CD3E and CD247 enabling the recruitment of ZAP70. In turn ZAP70 phosphorylates LAT, which recruits numerous signaling molecules to form the LAT signalosome. The LAT signalosome propagates signal branching to three major signaling pathways, the calcium, the mitogen-activated protein kinase (MAPK) kinase and the nuclear factor NF-kappa-B (NF-kB) pathways, leading to the mobilization of transcription factors that are critical for gene expression and essential for T cell growth and differentiation. The T cell repertoire is generated in the thymus, by V-(D)-J rearrangement. This repertoire is then shaped by intrathymic selection events to generate a peripheral T cell pool of self-MH restricted, non-autoaggressive T cells. Post-thymic interaction of alpha-beta TR with the pMH complexes shapes TR structural and functional avidity. This is T cell receptor beta variable 6-6 from Homo sapiens (Human).